Here is a 900-residue protein sequence, read N- to C-terminus: Bifunctional uridylyltransferase/uridylyl-removing enzyme (900 aa).

The segment at 1 to 342 is uridylyltransferase; sequence MPQVDPELFD…PCEQPVQIQP (342 aa). The uridylyl-removing stretch occupies residues 343–705; that stretch reads LNSRFQLRDG…TTQREFESGS (363 aa). Positions 461–583 constitute an HD domain; that stretch reads VDAHTLNLIK…VGDQTHLDYL (123 aa). 2 ACT domains span residues 706-789 and 816-891; these read QIFI…IIQR and VLEV…DNGR.

It belongs to the GlnD family. It depends on Mg(2+) as a cofactor.

It carries out the reaction [protein-PII]-L-tyrosine + UTP = [protein-PII]-uridylyl-L-tyrosine + diphosphate. It catalyses the reaction [protein-PII]-uridylyl-L-tyrosine + H2O = [protein-PII]-L-tyrosine + UMP + H(+). Its activity is regulated as follows. Uridylyltransferase (UTase) activity is inhibited by glutamine, while glutamine activates uridylyl-removing (UR) activity. In terms of biological role, modifies, by uridylylation and deuridylylation, the PII regulatory proteins (GlnB and homologs), in response to the nitrogen status of the cell that GlnD senses through the glutamine level. Under low glutamine levels, catalyzes the conversion of the PII proteins and UTP to PII-UMP and PPi, while under higher glutamine levels, GlnD hydrolyzes PII-UMP to PII and UMP (deuridylylation). Thus, controls uridylylation state and activity of the PII proteins, and plays an important role in the regulation of nitrogen assimilation and metabolism. This chain is Bifunctional uridylyltransferase/uridylyl-removing enzyme, found in Pseudomonas aeruginosa (strain UCBPP-PA14).